The primary structure comprises 202 residues: MSIEVFNESGYDGVNEEALIDVAQFALMRMDIHPAADMTISIVDEPTIEDLHVRWLNLEGPTDVMSFPMDELTPGSGRPDADAPGPAMLGDIVLCPAFAERQAHRAGHGLGHELSLLTVHGILHLLGYDHVAPEEERRMFALQNDILADWYTDLEERGVSYGPKPTGPGAFPTAADREALDQDMIKSTVGGMLAEPTDRDKS.

His120, His124, and His130 together coordinate Zn(2+).

It belongs to the endoribonuclease YbeY family. Zn(2+) is required as a cofactor.

It is found in the cytoplasm. Its function is as follows. Single strand-specific metallo-endoribonuclease involved in late-stage 70S ribosome quality control and in maturation of the 3' terminus of the 16S rRNA. This Corynebacterium kroppenstedtii (strain DSM 44385 / JCM 11950 / CIP 105744 / CCUG 35717) protein is Endoribonuclease YbeY.